We begin with the raw amino-acid sequence, 461 residues long: Probable outer membrane lipoprotein SilC (461 aa).

The first 17 residues, 1-17, serve as a signal peptide directing secretion; sequence MFKLKLLSISTIFILAG. Residue Cys18 is the site of N-palmitoyl cysteine attachment. Cys18 carries S-diacylglycerol cysteine lipidation.

The protein belongs to the outer membrane factor (OMF) (TC 1.B.17) family.

It localises to the cell outer membrane. Component of the sil cation-efflux system that confers resistance to silver. May be part of a three-component cation/proton antiporter. The sequence is that of Probable outer membrane lipoprotein SilC (silC) from Salmonella typhimurium.